Reading from the N-terminus, the 210-residue chain is Putative tyrosine-protein phosphatase OCA1 (210 aa).

Positions 44 to 204 (NFCPVERYLY…EIDREKAPNW (161 aa)) constitute a Tyrosine-protein phosphatase domain. The active-site Phosphocysteine intermediate is the Cys-140.

This sequence belongs to the protein-tyrosine phosphatase family.

It localises to the cytoplasm. The enzyme catalyses O-phospho-L-tyrosyl-[protein] + H2O = L-tyrosyl-[protein] + phosphate. Its function is as follows. Putative tyrosine-protein phosphatase required for protection against superoxide stress. This chain is Putative tyrosine-protein phosphatase OCA1 (OCA1), found in Kluyveromyces lactis (strain ATCC 8585 / CBS 2359 / DSM 70799 / NBRC 1267 / NRRL Y-1140 / WM37) (Yeast).